The chain runs to 456 residues: Bifunctional protein GlmU (456 aa).

Residues 1-229 form a pyrophosphorylase region; sequence MLNNAMSVVI…LSEVEGVNNR (229 aa). UDP-N-acetyl-alpha-D-glucosamine-binding positions include 11–14, Lys25, Gln76, 81–82, 103–105, Gly140, Glu154, Asn169, and Asn227; these read LAAG, GT, and YGD. Asp105 is a binding site for Mg(2+). Asn227 contacts Mg(2+). Residues 230 to 250 are linker; sequence LQLSRLERVYQSEQAEKLLLA. Residues 251-456 are N-acetyltransferase; that stretch reads GVMLRDPARF…EGWRRPVKKK (206 aa). UDP-N-acetyl-alpha-D-glucosamine-binding residues include Arg333 and Lys351. His363 functions as the Proton acceptor in the catalytic mechanism. Residues Tyr366 and Asn377 each coordinate UDP-N-acetyl-alpha-D-glucosamine. Residues Ala380, 386–387, Ser405, Ala423, and Arg440 contribute to the acetyl-CoA site; that span reads NY.

It in the N-terminal section; belongs to the N-acetylglucosamine-1-phosphate uridyltransferase family. This sequence in the C-terminal section; belongs to the transferase hexapeptide repeat family. As to quaternary structure, homotrimer. The cofactor is Mg(2+).

It localises to the cytoplasm. It catalyses the reaction alpha-D-glucosamine 1-phosphate + acetyl-CoA = N-acetyl-alpha-D-glucosamine 1-phosphate + CoA + H(+). It carries out the reaction N-acetyl-alpha-D-glucosamine 1-phosphate + UTP + H(+) = UDP-N-acetyl-alpha-D-glucosamine + diphosphate. Its pathway is nucleotide-sugar biosynthesis; UDP-N-acetyl-alpha-D-glucosamine biosynthesis; N-acetyl-alpha-D-glucosamine 1-phosphate from alpha-D-glucosamine 6-phosphate (route II): step 2/2. It participates in nucleotide-sugar biosynthesis; UDP-N-acetyl-alpha-D-glucosamine biosynthesis; UDP-N-acetyl-alpha-D-glucosamine from N-acetyl-alpha-D-glucosamine 1-phosphate: step 1/1. It functions in the pathway bacterial outer membrane biogenesis; LPS lipid A biosynthesis. Its function is as follows. Catalyzes the last two sequential reactions in the de novo biosynthetic pathway for UDP-N-acetylglucosamine (UDP-GlcNAc). The C-terminal domain catalyzes the transfer of acetyl group from acetyl coenzyme A to glucosamine-1-phosphate (GlcN-1-P) to produce N-acetylglucosamine-1-phosphate (GlcNAc-1-P), which is converted into UDP-GlcNAc by the transfer of uridine 5-monophosphate (from uridine 5-triphosphate), a reaction catalyzed by the N-terminal domain. This is Bifunctional protein GlmU from Escherichia fergusonii (strain ATCC 35469 / DSM 13698 / CCUG 18766 / IAM 14443 / JCM 21226 / LMG 7866 / NBRC 102419 / NCTC 12128 / CDC 0568-73).